Here is a 593-residue protein sequence, read N- to C-terminus: Mono(ADP-ribosyl)transferase SpvB (593 aa).

The segment at 361-384 (PVNNMMPPPPPPPPPMMGGNSSRP) is disordered. Pro residues predominate over residues 366–376 (MPPPPPPPPPM). Residues 375-578 (PMMGGNSSRP…LRLSDDATAD (204 aa)) form the TR mART core domain. Active-site residues include arginine 473, serine 503, and glutamate 540.

It belongs to the SpvB family.

The protein resides in the secreted. It carries out the reaction L-arginyl-[protein] + NAD(+) = N(omega)-(ADP-D-ribosyl)-L-arginyl-[protein] + nicotinamide + H(+). Mono-ADP-ribosylates muscle and non-muscle actin. ADP-ribosylates Chinese hamster ovary and HeLa cell actin as well as rabbit muscle, porcine heart actin and non-muscle beta- and gamma-actin. ADP-ribosylation of actin prevents the polymerization of G actin to F actin, causing actin filament depolymerization, destruction of the cytoskeleton and cytotoxicity; this requires only the C-terminal 120 residues. Does not possess NAD(+)-glycohydrolase activity, unlike most mART enzymes. In Salmonella dublin, this protein is Mono(ADP-ribosyl)transferase SpvB (spvB).